The sequence spans 270 residues: NAD kinase (270 aa).

D62 (proton acceptor) is an active-site residue. NAD(+) is bound by residues D62–G63, R67, N129–D130, K140, D159, I167, T170–S175, A194, and Q227.

The protein belongs to the NAD kinase family. The cofactor is a divalent metal cation.

The protein resides in the cytoplasm. The catalysed reaction is NAD(+) + ATP = ADP + NADP(+) + H(+). Its function is as follows. Involved in the regulation of the intracellular balance of NAD and NADP, and is a key enzyme in the biosynthesis of NADP. Catalyzes specifically the phosphorylation on 2'-hydroxyl of the adenosine moiety of NAD to yield NADP. The sequence is that of NAD kinase from Picrophilus torridus (strain ATCC 700027 / DSM 9790 / JCM 10055 / NBRC 100828 / KAW 2/3).